Here is a 186-residue protein sequence, read N- to C-terminus: Crossover junction endodeoxyribonuclease RuvC (186 aa).

Catalysis depends on residues D7, E67, and D140. Mg(2+)-binding residues include D7, E67, and D140.

This sequence belongs to the RuvC family. In terms of assembly, homodimer which binds Holliday junction (HJ) DNA. The HJ becomes 2-fold symmetrical on binding to RuvC with unstacked arms; it has a different conformation from HJ DNA in complex with RuvA. In the full resolvosome a probable DNA-RuvA(4)-RuvB(12)-RuvC(2) complex forms which resolves the HJ. The cofactor is Mg(2+).

It is found in the cytoplasm. It carries out the reaction Endonucleolytic cleavage at a junction such as a reciprocal single-stranded crossover between two homologous DNA duplexes (Holliday junction).. The RuvA-RuvB-RuvC complex processes Holliday junction (HJ) DNA during genetic recombination and DNA repair. Endonuclease that resolves HJ intermediates. Cleaves cruciform DNA by making single-stranded nicks across the HJ at symmetrical positions within the homologous arms, yielding a 5'-phosphate and a 3'-hydroxyl group; requires a central core of homology in the junction. The consensus cleavage sequence is 5'-(A/T)TT(C/G)-3'. Cleavage occurs on the 3'-side of the TT dinucleotide at the point of strand exchange. HJ branch migration catalyzed by RuvA-RuvB allows RuvC to scan DNA until it finds its consensus sequence, where it cleaves and resolves the cruciform DNA. This chain is Crossover junction endodeoxyribonuclease RuvC, found in Chloroherpeton thalassium (strain ATCC 35110 / GB-78).